The sequence spans 858 residues: Elongation factor 2b (858 aa).

The 346-residue stretch at 17 to 362 folds into the tr-type G domain; it reads SNIRNMSVIA…MITIHLPSPV (346 aa). GTP-binding positions include 26-33, 158-161, and 216-218; these read AHVDHGKS, NKMD, and SGL. A Diphthamide modification is found at His715.

The protein belongs to the TRAFAC class translation factor GTPase superfamily. Classic translation factor GTPase family. EF-G/EF-2 subfamily. As to quaternary structure, binds to 80S ribosomes. Actively translating ribosomes show mutually exclusive binding of eIF5a (EIF5A or EIF5A2) and EEF2/eEF2. Interacts with serbp1; interaction sequesters eef2/eEF2 at the A-site of the ribosome, thereby blocking the interaction sites of the mRNA-tRNA complex, promoting ribosome stabilization and hibernation. Interacts with habp4; interaction takes place at the A-site of hibernating ribosomes and promotes ribosome stabilization.

The protein localises to the cytoplasm. Its subcellular location is the nucleus. The catalysed reaction is GTP + H2O = GDP + phosphate + H(+). In terms of biological role, catalyzes the GTP-dependent ribosomal translocation step during translation elongation. During this step, the ribosome changes from the pre-translocational (PRE) to the post-translocational (POST) state as the newly formed A-site-bound peptidyl-tRNA and P-site-bound deacylated tRNA move to the P and E sites, respectively. Catalyzes the coordinated movement of the two tRNA molecules, the mRNA and conformational changes in the ribosome. This is Elongation factor 2b from Danio rerio (Zebrafish).